A 308-amino-acid chain; its full sequence is Ribosomal RNA small subunit methyltransferase H (308 aa).

Residues 34–36 (GGH), Asp-54, Phe-80, Asp-101, and Gln-108 each bind S-adenosyl-L-methionine.

The protein belongs to the methyltransferase superfamily. RsmH family.

The protein resides in the cytoplasm. The enzyme catalyses cytidine(1402) in 16S rRNA + S-adenosyl-L-methionine = N(4)-methylcytidine(1402) in 16S rRNA + S-adenosyl-L-homocysteine + H(+). Its function is as follows. Specifically methylates the N4 position of cytidine in position 1402 (C1402) of 16S rRNA. This chain is Ribosomal RNA small subunit methyltransferase H, found in Ureaplasma urealyticum serovar 10 (strain ATCC 33699 / Western).